We begin with the raw amino-acid sequence, 233 residues long: Ribulose-phosphate 3-epimerase (233 aa).

S16 contacts substrate. 3 residues coordinate a divalent metal cation: H41, D43, and H74. The active-site Proton acceptor is D43. Substrate-binding positions include H74, 150-153, 185-187, and 207-208; these read GFCG, DGG, and AS. D185 is a binding site for a divalent metal cation. Residue D185 is the Proton donor of the active site.

Belongs to the ribulose-phosphate 3-epimerase family. Requires a divalent metal cation as cofactor.

It catalyses the reaction D-ribulose 5-phosphate = D-xylulose 5-phosphate. The protein operates within carbohydrate degradation. In terms of biological role, catalyzes the reversible epimerization of D-ribulose 5-phosphate to D-xylulose 5-phosphate. This Chlamydia trachomatis serovar D (strain ATCC VR-885 / DSM 19411 / UW-3/Cx) protein is Ribulose-phosphate 3-epimerase.